A 152-amino-acid polypeptide reads, in one-letter code: Perlwapin (152 aa).

The signal sequence occupies residues 1–18 (LILCVVVCTAAVLGTAAG). The 43-residue stretch at 19 to 61 (YESQLPGCPPGAYPAICARYCYSDRDCASGYYCCNTGCLNICV) folds into the WAP 1 domain. Disulfide bonds link cysteine 26–cysteine 52, cysteine 35–cysteine 56, cysteine 39–cysteine 51, cysteine 45–cysteine 60, cysteine 69–cysteine 95, cysteine 77–cysteine 100, cysteine 82–cysteine 94, cysteine 88–cysteine 103, cysteine 112–cysteine 139, cysteine 122–cysteine 142, cysteine 126–cysteine 138, and cysteine 132–cysteine 146. Residues 62–107 (PKPKPGLCPSITQSPCRGNVCNNDQDCPGNRKCCGKPGCKRCYRPK) form the WAP 2; atypical domain. In terms of domain architecture, WAP 3 spans 108–150 (KPGSCPARKYEAGPCVVYCDGDFDCPGDKKCCGGCPRLCEKPC).

Component of the acid-soluble and acid-insoluble organic matrix of prismatic shell layers (at protein level).

Its subcellular location is the secreted. Its function is as follows. Inhibits growth of calcium carbonate crystals. May inhibit growth of certain crystallographic planes in the mineral phase of nacre in the shell. The sequence is that of Perlwapin from Haliotis asinina (Donkey's ear abalone).